A 40-amino-acid chain; its full sequence is Muscarinic m1-toxin3 (40 aa).

An intrachain disulfide couples C3 to C24.

This sequence belongs to the three-finger toxin family. Short-chain subfamily. Aminergic toxin sub-subfamily. As to quaternary structure, monomer. In terms of processing, contains 4 disulfide bonds. In terms of tissue distribution, expressed by the venom gland.

It localises to the secreted. Binds irreversibly and specifically to M1 (CHRM1) muscarinic acetylcholine receptors, blocking further binding of antagonists and preventing the action of agonists. The chain is Muscarinic m1-toxin3 from Dendroaspis angusticeps (Eastern green mamba).